The sequence spans 244 residues: UPF0173 metal-dependent hydrolase RoseRS_3945 (244 aa).

The protein belongs to the UPF0173 family.

The chain is UPF0173 metal-dependent hydrolase RoseRS_3945 from Roseiflexus sp. (strain RS-1).